The sequence spans 496 residues: NADH-ubiquinone oxidoreductase 51 kDa subunit, mitochondrial (496 aa).

A mitochondrion-targeting transit peptide spans 1–30 (MISRAAAPSSSIASLSSRSLRAQAPAARSF). 98–107 (GRGGAGFPSG) is a binding site for NAD(+). FMN is bound at residue 214-261 (GMGAYVCGEETSLIESIEGKAGKPRLKPPFPAAVGLFGCPSTVTNVET). [4Fe-4S] cluster is bound by residues Cys393, Cys396, Cys399, and Cys439.

It belongs to the complex I 51 kDa subunit family. In terms of assembly, complex I is composed of about 40 different subunits. This is a component of the flavoprotein-sulfur (FP) fragment of the enzyme. FMN serves as cofactor. The cofactor is [4Fe-4S] cluster.

It is found in the mitochondrion inner membrane. It catalyses the reaction a ubiquinone + NADH + 5 H(+)(in) = a ubiquinol + NAD(+) + 4 H(+)(out). In terms of biological role, core subunit of the mitochondrial membrane respiratory chain NADH dehydrogenase (Complex I) that is believed to belong to the minimal assembly required for catalysis. Complex I functions in the transfer of electrons from NADH to the respiratory chain. The immediate electron acceptor for the enzyme is believed to be ubiquinone. The chain is NADH-ubiquinone oxidoreductase 51 kDa subunit, mitochondrial (NUO51) from Aspergillus niger.